The chain runs to 140 residues: Putative pre-16S rRNA nuclease (140 aa).

It belongs to the YqgF nuclease family.

It localises to the cytoplasm. Could be a nuclease involved in processing of the 5'-end of pre-16S rRNA. This Moorella thermoacetica (strain ATCC 39073 / JCM 9320) protein is Putative pre-16S rRNA nuclease.